Here is a 90-residue protein sequence, read N- to C-terminus: DNA-binding protein HU-alpha (90 aa).

Belongs to the bacterial histone-like protein family. As to quaternary structure, heterodimer of an alpha and a beta chain.

Functionally, histone-like DNA-binding protein which is capable of wrapping DNA to stabilize it, and thus to prevent its denaturation under extreme environmental conditions. The chain is DNA-binding protein HU-alpha (hupA) from Aeromonas hydrophila.